We begin with the raw amino-acid sequence, 199 residues long: Glycerol-3-phosphate acyltransferase (199 aa).

5 consecutive transmembrane segments (helical) span residues 3–23 (YILIGLISYFCGAIPFSYLLP), 50–70 (VIGFICMVLDGVKAFVPVLVF), 77–97 (IHYTGISSIFAVLGHDFPVFL), 110–130 (GVFFALCPICGFTFLATWISI), and 136–156 (YVSLASIVGMYAASFVAFFFN).

The protein belongs to the PlsY family. Probably interacts with PlsX.

The protein localises to the cell inner membrane. The enzyme catalyses an acyl phosphate + sn-glycerol 3-phosphate = a 1-acyl-sn-glycero-3-phosphate + phosphate. It participates in lipid metabolism; phospholipid metabolism. In terms of biological role, catalyzes the transfer of an acyl group from acyl-phosphate (acyl-PO(4)) to glycerol-3-phosphate (G3P) to form lysophosphatidic acid (LPA). This enzyme utilizes acyl-phosphate as fatty acyl donor, but not acyl-CoA or acyl-ACP. This is Glycerol-3-phosphate acyltransferase from Pseudothermotoga lettingae (strain ATCC BAA-301 / DSM 14385 / NBRC 107922 / TMO) (Thermotoga lettingae).